The primary structure comprises 326 residues: MPPYISAFQAAYIGIEVLIALVSVPGNVLVIWAVKVNQALRDATFCFIVSLAVADVAVGALVIPLAILINIGPQTYFHTCLMVACPVLILTQSSILALLAIAVDRYLRVKIPLRYKTVVTQRRAAVAIAGCWILSLVVGLTPMFGWNNLSVVEQDWRANGSVGEPVIKCEFEKVISMEYMVYFNFFVWVLPPLLLMVLIYLEVFYLIRKQLNKKVSASSGDPQKYYGKELKIAKSLALILFLFALSWLPLHILNCITLFCPTCQKPSILIYIAIFLTHGNSAMNPIVYAFRIHKFRVTFLKIWNDHFRCQPKPPIDEDLPEEKAED.

At 1-10 the chain is on the extracellular side; that stretch reads MPPYISAFQA. A helical transmembrane segment spans residues 11–33; sequence AYIGIEVLIALVSVPGNVLVIWA. Residues 34-46 lie on the Cytoplasmic side of the membrane; that stretch reads VKVNQALRDATFC. The helical transmembrane segment at 47–69 threads the bilayer; the sequence is FIVSLAVADVAVGALVIPLAILI. The Extracellular portion of the chain corresponds to 70–80; that stretch reads NIGPQTYFHTC. Residues Cys-80 and Cys-169 are joined by a disulfide bond. The chain crosses the membrane as a helical span at residues 81-102; sequence LMVACPVLILTQSSILALLAIA. Topologically, residues 103-123 are cytoplasmic; it reads VDRYLRVKIPLRYKTVVTQRR. A helical membrane pass occupies residues 124–146; sequence AAVAIAGCWILSLVVGLTPMFGW. At 147-176 the chain is on the extracellular side; sequence NNLSVVEQDWRANGSVGEPVIKCEFEKVIS. N-linked (GlcNAc...) asparagine glycans are attached at residues Asn-148 and Asn-159. Residues 177-201 traverse the membrane as a helical segment; the sequence is MEYMVYFNFFVWVLPPLLLMVLIYL. At 202–235 the chain is on the cytoplasmic side; that stretch reads EVFYLIRKQLNKKVSASSGDPQKYYGKELKIAKS. A helical membrane pass occupies residues 236-259; the sequence is LALILFLFALSWLPLHILNCITLF. At 260 to 267 the chain is on the extracellular side; it reads CPTCQKPS. Residues 268-292 traverse the membrane as a helical segment; it reads ILIYIAIFLTHGNSAMNPIVYAFRI. Over 293–326 the chain is Cytoplasmic; the sequence is HKFRVTFLKIWNDHFRCQPKPPIDEDLPEEKAED. Cys-309 carries the S-palmitoyl cysteine lipid modification.

This sequence belongs to the G-protein coupled receptor 1 family. In terms of tissue distribution, widely expressed in brain and spinal cord.

It localises to the cell membrane. Functionally, receptor for adenosine. The activity of this receptor is mediated by G proteins which inhibit adenylyl cyclase. This chain is Adenosine receptor A1 (Adora1), found in Rattus norvegicus (Rat).